Reading from the N-terminus, the 507-residue chain is Histidine--tRNA ligase (507 aa).

Belongs to the class-II aminoacyl-tRNA synthetase family. In terms of assembly, homodimer.

Its subcellular location is the cytoplasm. It catalyses the reaction tRNA(His) + L-histidine + ATP = L-histidyl-tRNA(His) + AMP + diphosphate + H(+). The polypeptide is Histidine--tRNA ligase (Rhizobium leguminosarum bv. trifolii (strain WSM2304)).